Consider the following 150-residue polypeptide: D-aminoacyl-tRNA deacylase (150 aa).

The short motif at 140-141 (GP) is the Gly-cisPro motif, important for rejection of L-amino acids element.

Belongs to the DTD family. In terms of assembly, homodimer.

The protein localises to the cytoplasm. It catalyses the reaction glycyl-tRNA(Ala) + H2O = tRNA(Ala) + glycine + H(+). The enzyme catalyses a D-aminoacyl-tRNA + H2O = a tRNA + a D-alpha-amino acid + H(+). It carries out the reaction D-tyrosyl-tRNA(Tyr) + H2O = D-tyrosine + tRNA(Tyr). In terms of biological role, an aminoacyl-tRNA editing enzyme that deacylates mischarged D-aminoacyl-tRNAs. Hydrolyzes D-tyrosyl-tRNA(Tyr) into D-tyrosine and free tRNA(Tyr). May also deacylate mischarged D-leucyl-tRNA(Leu). Also deacylates mischarged glycyl-tRNA(Ala), protecting cells against glycine mischarging by AlaRS. Acts via tRNA-based rather than protein-based catalysis; rejects L-amino acids rather than detecting D-amino acids in the active site. By recycling D-aminoacyl-tRNA to D-amino acids and free tRNA molecules, this enzyme counteracts the toxicity associated with the formation of D-aminoacyl-tRNA entities in vivo and helps enforce protein L-homochirality. The chain is D-aminoacyl-tRNA deacylase from Saccharomyces cerevisiae (strain ATCC 204508 / S288c) (Baker's yeast).